Here is a 419-residue protein sequence, read N- to C-terminus: Voltage-gated potassium channel subunit beta-1 (419 aa).

The disordered stretch occupies residues 1 to 52; sequence MLAARTGAAGSQISEENTKLRRQSGFSVAGKDKSPKKASENAKDSSLSPSGE. A compositionally biased stretch (basic and acidic residues) spans 30–43; that stretch reads GKDKSPKKASENAK. NADP(+) is bound by residues threonine 108, tryptophan 109, glutamine 115, and aspartate 137. The Proton donor/acceptor role is filled by tyrosine 142. The NADP(+) site is built by asparagine 210, serine 240, arginine 241, glutamine 266, tryptophan 295, serine 296, proline 297, leucine 298, alanine 299, cysteine 300, lysine 306, arginine 316, glycine 375, serine 377, glutamine 381, glutamate 384, and asparagine 385.

The protein belongs to the shaker potassium channel beta subunit family. Homotetramer. Interaction with tetrameric potassium channel alpha subunits gives rise to a heterooctamer. Identified in potassium channel complexes containing KCNA1, KCNA2, KCNA4, KCNA5, KCNA6, KCNAB1 and KCNAB2. Part of a complex containing KCNA1, KCNA4 and LGI1; interaction with LGI1 inhibits down-regulation of KCNA1 channel activity. Interacts with the dimer formed by GNB1 and GNG2; this enhances KCNA1 binding. Interacts with SQSTM1. As to expression, in brain, expression is most prominent in caudate nucleus, hippocampus and thalamus. Significant expression also detected in amygdala and subthalamic nucleus. Also expressed in both healthy and cardiomyopathic heart. Up to four times more abundant in left ventricle than left atrium.

It is found in the cytoplasm. The protein localises to the membrane. It localises to the cell membrane. It carries out the reaction a primary alcohol + NADP(+) = an aldehyde + NADPH + H(+). It catalyses the reaction a secondary alcohol + NADP(+) = a ketone + NADPH + H(+). In terms of biological role, regulatory subunit of the voltage-gated potassium (Kv) Shaker channels composed of pore-forming and potassium-conducting alpha subunits and of regulatory beta subunits. The beta-1/KCNAB1 cytoplasmic subunit mediates closure of delayed rectifier potassium channels by physically obstructing the pore via its N-terminal domain and increases the speed of channel closure for other family members. Promotes the inactivation of Kv1.1/KCNA1, Kv1.2/KCNA2, Kv1.4/KCNA4, Kv1.5/KCNA5 and Kv1.6/KCNA6 alpha subunit-containing channels. Displays nicotinamide adenine dinucleotide phosphate (NADPH)-dependent aldoketoreductase activity by catalyzing the NADPH-dependent reduction of a variety of endogenous aldehydes and ketones. The binding of NADPH is required for efficient down-regulation of potassium channel activity. Oxidation of the bound NADPH restrains N-terminal domain from blocking the channel, thereby decreasing N-type inactivation of potassium channel activity. Isoform KvB1.2 shows no effect on KCNA1, KCNA2 or KCNB1. This Homo sapiens (Human) protein is Voltage-gated potassium channel subunit beta-1.